The following is a 276-amino-acid chain: MDLWTAAQALILGVVEGLTEFLPISSTGHQIIVADLIDFGGERAMAFNIIIQLGAILAVVWEFRRKILDVVVGLPKQQQAQRFTLNLLIAFMPAVVLGVIFADTIHHYLFNAITVATALVIGGVIMLWAERREHTVRTETVDDMSWSDALKIGLVQCLAMIPGTSRSGSTIIGGLLFGLSRKAATEFSFFLAMPTMVGAAVYSGYKYRDMFRPDDFAVFAIGFVTSFIFAMIAVRGLLKFIATHSYAVFAWYRIAFGLLILATWQFGWIDWASAKA.

The next 6 helical transmembrane spans lie at 43 to 63, 85 to 105, 109 to 129, 183 to 203, 218 to 238, and 254 to 274; these read RAMAFNIIIQLGAILAVVWEF, LNLLIAFMPAVVLGVIFADTI, LFNAITVATALVIGGVIMLWA, AATEFSFFLAMPTMVGAAVYS, VFAIGFVTSFIFAMIAVRGLL, and IAFGLLILATWQFGWIDWASA.

Belongs to the UppP family.

The protein resides in the cell inner membrane. The enzyme catalyses di-trans,octa-cis-undecaprenyl diphosphate + H2O = di-trans,octa-cis-undecaprenyl phosphate + phosphate + H(+). In terms of biological role, catalyzes the dephosphorylation of undecaprenyl diphosphate (UPP). Confers resistance to bacitracin. This chain is Undecaprenyl-diphosphatase, found in Pseudomonas syringae pv. syringae (strain B728a).